A 129-amino-acid polypeptide reads, in one-letter code: Small ribosomal subunit protein uS11 (129 aa).

It belongs to the universal ribosomal protein uS11 family. Part of the 30S ribosomal subunit. Interacts with proteins S7 and S18. Binds to IF-3.

In terms of biological role, located on the platform of the 30S subunit, it bridges several disparate RNA helices of the 16S rRNA. Forms part of the Shine-Dalgarno cleft in the 70S ribosome. This is Small ribosomal subunit protein uS11 from Tolumonas auensis (strain DSM 9187 / NBRC 110442 / TA 4).